The chain runs to 588 residues: Zinc finger protein 599 (588 aa).

The KRAB domain maps to 9 to 80 (VSFEDVVVTF…KRGLSQSTCA (72 aa)). 14 C2H2-type zinc fingers span residues 199 to 221 (YTCT…QQIH), 227 to 249 (YECN…MRLH), 255 to 277 (YKCI…QRIH), 283 to 305 (YECK…NMTH), 311 to 333 (FLCK…MRIH), 339 to 361 (YECG…NVTH), 367 to 389 (FLCK…MRIH), 395 to 417 (YECG…KRTH), 423 to 445 (FECK…MRIH), 451 to 473 (YECS…NRTH), 479 to 501 (LECK…MRIH), 507 to 529 (YVCR…NRIH), 535 to 557 (FECK…MRTH), and 563 to 585 (FECN…RKIH).

It belongs to the krueppel C2H2-type zinc-finger protein family.

Its subcellular location is the nucleus. Functionally, may be involved in transcriptional regulation. This Homo sapiens (Human) protein is Zinc finger protein 599 (ZNF599).